A 586-amino-acid chain; its full sequence is Arginine--tRNA ligase (586 aa).

The 'HIGH' region motif lies at 131–141 (ANPTGPLHVGH).

The protein belongs to the class-I aminoacyl-tRNA synthetase family. In terms of assembly, monomer.

Its subcellular location is the cytoplasm. It catalyses the reaction tRNA(Arg) + L-arginine + ATP = L-arginyl-tRNA(Arg) + AMP + diphosphate. This Nitrosomonas europaea (strain ATCC 19718 / CIP 103999 / KCTC 2705 / NBRC 14298) protein is Arginine--tRNA ligase.